Consider the following 188-residue polypeptide: Photosystem I assembly protein Ycf4 (188 aa).

2 consecutive transmembrane segments (helical) span residues 28-48 and 68-88; these read WATVITIGGTGFFLAGLSSYL and IAIGFYGVAALLLAIYLWATI.

Belongs to the Ycf4 family.

Its subcellular location is the cellular thylakoid membrane. Its function is as follows. Seems to be required for the assembly of the photosystem I complex. This chain is Photosystem I assembly protein Ycf4, found in Cyanothece sp. (strain PCC 7425 / ATCC 29141).